The sequence spans 37 residues: Large ribosomal subunit protein bL36 (37 aa).

Belongs to the bacterial ribosomal protein bL36 family.

The protein is Large ribosomal subunit protein bL36 of Idiomarina loihiensis (strain ATCC BAA-735 / DSM 15497 / L2-TR).